The following is a 494-amino-acid chain: Alpha-amylase 1 (494 aa).

Residues M1–A18 form the signal peptide. An intrachain disulfide couples C46 to C102. Ca(2+) contacts are provided by N116, R165, and D174. C153 and C167 form a disulfide bridge. Position 202 (R202) interacts with chloride. D204 acts as the Nucleophile in catalysis. H208 is a binding site for Ca(2+). Residue E241 is the Proton donor of the active site. Chloride-binding residues include N304 and R343. Positions F350–F370 are disordered. Residues T351–Q363 show a composition bias toward low complexity. 2 disulfides stabilise this stretch: C376–C382 and C448–C460.

It belongs to the glycosyl hydrolase 13 family. Monomer. Requires Ca(2+) as cofactor. The cofactor is chloride.

The enzyme catalyses Endohydrolysis of (1-&gt;4)-alpha-D-glucosidic linkages in polysaccharides containing three or more (1-&gt;4)-alpha-linked D-glucose units.. The chain is Alpha-amylase 1 (Amy35) from Drosophila ananassae (Fruit fly).